Here is a 189-residue protein sequence, read N- to C-terminus: Protein GrpE (189 aa).

Residues 1 to 38 show a composition bias toward basic and acidic residues; the sequence is MTKSNETERMEESEETHSSDIRSASESDHASGSDHTES. A disordered region spans residues 1-54; sequence MTKSNETERMEESEETHSSDIRSASESDHASGSDHTESADEIPTADAEQGELEQ.

The protein belongs to the GrpE family. As to quaternary structure, homodimer.

It is found in the cytoplasm. In terms of biological role, participates actively in the response to hyperosmotic and heat shock by preventing the aggregation of stress-denatured proteins, in association with DnaK and GrpE. It is the nucleotide exchange factor for DnaK and may function as a thermosensor. Unfolded proteins bind initially to DnaJ; upon interaction with the DnaJ-bound protein, DnaK hydrolyzes its bound ATP, resulting in the formation of a stable complex. GrpE releases ADP from DnaK; ATP binding to DnaK triggers the release of the substrate protein, thus completing the reaction cycle. Several rounds of ATP-dependent interactions between DnaJ, DnaK and GrpE are required for fully efficient folding. This is Protein GrpE from Tropheryma whipplei (strain Twist) (Whipple's bacillus).